The chain runs to 474 residues: Magnesium transporter MRS2-A, chloroplastic (474 aa).

The transit peptide at 1 to 55 directs the protein to the chloroplast; sequence MASVSSSPSYSSQAAVLLLLHQPPHQHGHGGACLRYRGSQSQGRGNAVATSLGLS. Residues 79–129 form a disordered region; sequence GKDGRAVTKDEEEEAAAAAVEEEGEVEVRREEDKPGDDGSREAAARGSGSG. Positions 88 to 103 are enriched in acidic residues; it reads DEEEEAAAAAVEEEGE. Over residues 104–122 the composition is skewed to basic and acidic residues; that stretch reads VEVRREEDKPGDDGSREAA. Helical transmembrane passes span 412–432 and 444–464; these read LLLQ…GIFG and WAFW…FFIM. The Required for magnesium transport activity motif lies at 432–434; the sequence is GMN.

The protein belongs to the CorA metal ion transporter (MIT) (TC 1.A.35.5) family.

It is found in the plastid. The protein resides in the chloroplast membrane. In terms of biological role, magnesium transporter that may mediate the influx of magnesium in chloroplast. This Oryza sativa subsp. japonica (Rice) protein is Magnesium transporter MRS2-A, chloroplastic (MRS2-A).